Here is a 102-residue protein sequence, read N- to C-terminus: Small ribosomal subunit protein uS10 (102 aa).

Belongs to the universal ribosomal protein uS10 family. As to quaternary structure, part of the 30S ribosomal subunit.

Its function is as follows. Involved in the binding of tRNA to the ribosomes. This is Small ribosomal subunit protein uS10 from Bacillus anthracis (strain A0248).